Here is a 496-residue protein sequence, read N- to C-terminus: GTPase Der (496 aa).

EngA-type G domains lie at 3–166 (PVVA…FDNL) and 208–381 (IKLA…RSAT). GTP contacts are provided by residues 9–16 (GRPNVGKS), 56–60 (DTGGI), 118–121 (NKVD), 214–221 (GRPNVGKS), 261–265 (DTAGV), and 326–329 (NKWD). Residues 382–466 (TRVGTSVLTR…PIRIQFQNSD (85 aa)) enclose the KH-like domain.

The protein belongs to the TRAFAC class TrmE-Era-EngA-EngB-Septin-like GTPase superfamily. EngA (Der) GTPase family. Associates with the 50S ribosomal subunit.

In terms of biological role, GTPase that plays an essential role in the late steps of ribosome biogenesis. The chain is GTPase Der from Vibrio vulnificus (strain YJ016).